A 536-amino-acid chain; its full sequence is Zinc finger CCCH domain-containing protein 18 (536 aa).

The C3H1-type zinc-finger motif lies at 156–183 (EFPVKICHYFNKGFCKHGNNCRYFHGQI). The 84-residue stretch at 211–294 (SLEKLEGEII…HGQHSVILAE (84 aa)) folds into the HTH OST-type domain. The 76-residue stretch at 317–392 (RQIYLTFPAE…ARVLVKPYRE (76 aa)) folds into the RRM domain.

Its function is as follows. Possesses ribonuclease activity in vitro. This Arabidopsis thaliana (Mouse-ear cress) protein is Zinc finger CCCH domain-containing protein 18.